We begin with the raw amino-acid sequence, 409 residues long: Tyrosine--tRNA ligase (409 aa).

Positions 54–63 match the 'HIGH' region motif; that stretch reads PTAPDIHLGH. The 'KMSKS' region signature appears at 238 to 242; the sequence is KMSKS. K241 serves as a coordination point for ATP. One can recognise an S4 RNA-binding domain in the interval 347 to 407; that stretch reads QGILRILREA…GKRKFARVKL (61 aa).

Belongs to the class-I aminoacyl-tRNA synthetase family. TyrS type 2 subfamily. In terms of assembly, homodimer.

Its subcellular location is the cytoplasm. The enzyme catalyses tRNA(Tyr) + L-tyrosine + ATP = L-tyrosyl-tRNA(Tyr) + AMP + diphosphate + H(+). Its function is as follows. Catalyzes the attachment of tyrosine to tRNA(Tyr) in a two-step reaction: tyrosine is first activated by ATP to form Tyr-AMP and then transferred to the acceptor end of tRNA(Tyr). The chain is Tyrosine--tRNA ligase from Bordetella pertussis (strain Tohama I / ATCC BAA-589 / NCTC 13251).